A 266-amino-acid polypeptide reads, in one-letter code: Thymidylate synthase (266 aa).

Arg-24 serves as a coordination point for dUMP. Position 54 (His-54) interacts with (6R)-5,10-methylene-5,6,7,8-tetrahydrofolate. 129-130 (RR) lines the dUMP pocket. Cys-149 serves as the catalytic Nucleophile. DUMP contacts are provided by residues 169–172 (RSAD), Asn-180, and 210–212 (HIY). Asp-172 contacts (6R)-5,10-methylene-5,6,7,8-tetrahydrofolate. (6R)-5,10-methylene-5,6,7,8-tetrahydrofolate is bound at residue Ala-265.

The protein belongs to the thymidylate synthase family. Bacterial-type ThyA subfamily. Homodimer.

The protein localises to the cytoplasm. The catalysed reaction is dUMP + (6R)-5,10-methylene-5,6,7,8-tetrahydrofolate = 7,8-dihydrofolate + dTMP. Its pathway is pyrimidine metabolism; dTTP biosynthesis. In terms of biological role, catalyzes the reductive methylation of 2'-deoxyuridine-5'-monophosphate (dUMP) to 2'-deoxythymidine-5'-monophosphate (dTMP) while utilizing 5,10-methylenetetrahydrofolate (mTHF) as the methyl donor and reductant in the reaction, yielding dihydrofolate (DHF) as a by-product. This enzymatic reaction provides an intracellular de novo source of dTMP, an essential precursor for DNA biosynthesis. In Mycolicibacterium smegmatis (strain ATCC 700084 / mc(2)155) (Mycobacterium smegmatis), this protein is Thymidylate synthase.